Reading from the N-terminus, the 137-residue chain is Putative pre-16S rRNA nuclease (137 aa).

The protein belongs to the YqgF nuclease family.

Its subcellular location is the cytoplasm. In terms of biological role, could be a nuclease involved in processing of the 5'-end of pre-16S rRNA. This chain is Putative pre-16S rRNA nuclease, found in Bacillus cereus (strain G9842).